Reading from the N-terminus, the 396-residue chain is 1-deoxy-D-xylulose 5-phosphate reductoisomerase (396 aa).

Thr-13, Gly-14, Ser-15, Ile-16, and Asn-127 together coordinate NADPH. Residue Lys-128 coordinates 1-deoxy-D-xylulose 5-phosphate. Residue Glu-129 participates in NADPH binding. A Mn(2+)-binding site is contributed by Asp-153. Positions 154, 155, 184, and 207 each coordinate 1-deoxy-D-xylulose 5-phosphate. Residue Glu-155 coordinates Mn(2+). An NADPH-binding site is contributed by Gly-213. 1-deoxy-D-xylulose 5-phosphate is bound by residues Ser-220, Asn-225, Lys-226, and Glu-229. Glu-229 lines the Mn(2+) pocket.

The protein belongs to the DXR family. The cofactor is Mg(2+). Mn(2+) serves as cofactor.

It carries out the reaction 2-C-methyl-D-erythritol 4-phosphate + NADP(+) = 1-deoxy-D-xylulose 5-phosphate + NADPH + H(+). It participates in isoprenoid biosynthesis; isopentenyl diphosphate biosynthesis via DXP pathway; isopentenyl diphosphate from 1-deoxy-D-xylulose 5-phosphate: step 1/6. In terms of biological role, catalyzes the NADPH-dependent rearrangement and reduction of 1-deoxy-D-xylulose-5-phosphate (DXP) to 2-C-methyl-D-erythritol 4-phosphate (MEP). This Pseudomonas fluorescens (strain Pf0-1) protein is 1-deoxy-D-xylulose 5-phosphate reductoisomerase.